We begin with the raw amino-acid sequence, 399 residues long: Argininosuccinate synthase (399 aa).

Residues 10-18 (AYSGGVDTS) and Ala-38 each bind ATP. Tyr-89 contributes to the L-citrulline binding site. Residue Gly-119 participates in ATP binding. Residues Thr-121, Asn-125, and Asp-126 each coordinate L-aspartate. Asn-125 is a binding site for L-citrulline. Residues Arg-129, Ser-177, Ser-186, Glu-262, and Tyr-274 each contribute to the L-citrulline site.

Belongs to the argininosuccinate synthase family. Type 1 subfamily. As to quaternary structure, homotetramer.

Its subcellular location is the cytoplasm. It carries out the reaction L-citrulline + L-aspartate + ATP = 2-(N(omega)-L-arginino)succinate + AMP + diphosphate + H(+). The protein operates within amino-acid biosynthesis; L-arginine biosynthesis; L-arginine from L-ornithine and carbamoyl phosphate: step 2/3. This is Argininosuccinate synthase from Picosynechococcus sp. (strain ATCC 27264 / PCC 7002 / PR-6) (Agmenellum quadruplicatum).